The chain runs to 249 residues: Voltage-gated potassium channel subunit beta-3 (249 aa).

The NADP(+) site is built by N44, S74, R75, Q100, W129, S130, P131, L132, A133, C134, K140, K150, G209, S211, Q215, and E218.

Belongs to the shaker potassium channel beta subunit family. Forms heteromultimeric complex with alpha subunits. Interacts with KCNA5 and KCNB2. Strong expression in brain, with highest levels in neocortical and allocortical regions, hippocampus, olfactory bulb and cerebellum. Also strong in kidney. Weak expression in lung, skeletal muscle and heart.

Its subcellular location is the cytoplasm. Its function is as follows. Regulatory subunit of the voltage-gated potassium (Kv) channels composed of pore-forming and potassium-conducting alpha subunits and of regulatory beta subunit. The beta-3/KCNAB3 subunit may mediate closure of potassium channels. Enhances the expression of Kv2.2/KCNB2 alpha subunit-containing Kv channels but not Kv2.1/KCNB1. May display nicotinamide adenine dinucleotide phosphate (NADPH)-dependent aldoketoreductase activity. The binding of oxidized and reduced NADP(H) cofactors may be required for the regulation of potassium channel activity. The chain is Voltage-gated potassium channel subunit beta-3 from Mus musculus (Mouse).